The following is a 140-amino-acid chain: Endoribonuclease YbeY (140 aa).

Zn(2+)-binding residues include His100, His104, and His110.

This sequence belongs to the endoribonuclease YbeY family. Requires Zn(2+) as cofactor.

The protein resides in the cytoplasm. In terms of biological role, single strand-specific metallo-endoribonuclease involved in late-stage 70S ribosome quality control and in maturation of the 3' terminus of the 16S rRNA. This chain is Endoribonuclease YbeY, found in Helicobacter pylori (strain ATCC 700392 / 26695) (Campylobacter pylori).